Here is a 148-residue protein sequence, read N- to C-terminus: Lysozyme C-1 (148 aa).

The first 18 residues, 1–18, serve as a signal peptide directing secretion; that stretch reads MKALLTLGLLLLSVTAQA. Residues 19 to 148 enclose the C-type lysozyme domain; that stretch reads KVYNRCELAR…LSQYIRNCGV (130 aa). 4 disulfides stabilise this stretch: Cys24–Cys146, Cys48–Cys134, Cys83–Cys99, and Cys95–Cys113. Active-site residues include Glu53 and Asp71.

It belongs to the glycosyl hydrolase 22 family. Monomer. In terms of tissue distribution, expressed strongly only in small intestine.

It localises to the secreted. It carries out the reaction Hydrolysis of (1-&gt;4)-beta-linkages between N-acetylmuramic acid and N-acetyl-D-glucosamine residues in a peptidoglycan and between N-acetyl-D-glucosamine residues in chitodextrins.. Lysozymes have primarily a bacteriolytic function; those in tissues and body fluids are associated with the monocyte-macrophage system and enhance the activity of immunoagents. Lyz1 is active against a range of Gram-positive and Gram-negative bacteria. Less effective than Lyz2 in killing Gram-negative bacteria. Lyz1 and Lyz2 are equally effective in killing Gram-positive bacteria. This is Lysozyme C-1 (Lyz1) from Mus musculus (Mouse).